Reading from the N-terminus, the 389-residue chain is Sulfate adenylyltransferase (389 aa).

Belongs to the sulfate adenylyltransferase family.

It carries out the reaction sulfate + ATP + H(+) = adenosine 5'-phosphosulfate + diphosphate. Its pathway is sulfur metabolism; hydrogen sulfide biosynthesis; sulfite from sulfate: step 1/3. This is Sulfate adenylyltransferase from Desulforamulus reducens (strain ATCC BAA-1160 / DSM 100696 / MI-1) (Desulfotomaculum reducens).